Consider the following 191-residue polypeptide: UPF0149 protein VC_2476 (191 aa).

Belongs to the UPF0149 family.

This chain is UPF0149 protein VC_2476, found in Vibrio cholerae serotype O1 (strain ATCC 39315 / El Tor Inaba N16961).